Reading from the N-terminus, the 375-residue chain is All-trans-retinol dehydrogenase [NAD(+)] ADH1B (375 aa).

Ser2 carries the N-acetylserine modification. Ser23 bears the Phosphoserine mark. Tyr35 bears the Phosphotyrosine mark. Zn(2+)-binding residues include Cys47, His68, Cys98, Cys101, Cys104, Cys112, and Cys175. Residues 200-205 (GLGGVG), Asp224, Lys229, 293-295 (VGV), and Arg370 each bind NAD(+).

It belongs to the zinc-containing alcohol dehydrogenase family. Homodimer or heterodimer of closely related subunits. It depends on Zn(2+) as a cofactor. Expressed in liver.

The protein resides in the cytoplasm. The enzyme catalyses all-trans-retinol + NAD(+) = all-trans-retinal + NADH + H(+). It catalyses the reaction all-trans-4-hydroxyretinol + NAD(+) = all-trans-4-hydroxyretinal + NADH + H(+). The catalysed reaction is all-trans-4-oxoretinol + NAD(+) = all-trans-4-oxoretinal + NADH + H(+). Catalyzes the NAD-dependent oxidation of all-trans-retinol and its derivatives such as all-trans-4-hydroxyretinol and may participate in retinoid metabolism. In vitro can also catalyze the NADH-dependent reduction of all-trans-retinal and its derivatives such as all-trans-4-oxoretinal. Catalyzes in the oxidative direction with higher efficiency. Has the same affinity for all-trans-4-hydroxyretinol and all-trans-4-oxoretinal. In Papio hamadryas (Hamadryas baboon), this protein is All-trans-retinol dehydrogenase [NAD(+)] ADH1B.